The sequence spans 700 residues: MAGIAAKLAKDREAAEGLGSHERAVKYLNQDYAALRDECLEAGALFQDPSFPALPSSLGFKELGPYSSKTRGIEWKRPTEICDNPQFITGGATRTDICQGALGDCWLLAAIASLTLNEEILARVVPLDQSFQENYAGIFHFQFWQYGEWVEVVVDDRLPTKDGELLFVHSAEGSEFWSALLEKAYAKINGCYEALSGGATTEGFEDFTGGIAEWYELRKAPPNLFRIIQKALQKGSLLGCSIDITSAADSEAITFQKLVKGHAYSVTGAEEVESRGSLQKLIRIRNPWGEVEWTGQWNDNCPNWNTVDPEVRETLTRQHEDGEFWMSFNDFLRHYSRLEICNLTPDTLTSDSYKKWKLTKMDGNWRRGSTAGGCRNYPNTFWMNPQYLIKLEEEDEDQEDGESGCTFLVGLIQKHRRRQRKMGEDMHTIGFGIYEVPEELTGQTNIHLSKKFFLTTRARERSDTFINLREVLNRFKLPPGEYIVVPSTFEPNKDGDFCIRVFSEKKADYQVVDDEIEANIDEIDISEDDIDDGFRRLFAQLAGEDAEISAFELQTILRRVLAKRQDIKSDGFSIETCKIMVDMLDSDGSGKLGLKEFYILWTKIQKYQKIYREIDVDRSGTMNSYEMRKALEEAGFKMPCQLHQVIVARFADDDLIIDFDNFVRCLIRLETLFRIFKQLDPENTGMIQLDLISWLSFSVL.

A2 is modified (N-acetylalanine). The propeptide at 2–19 (AGIAAKLAKDREAAEGLG) is anchors to the small subunit. The 300-residue stretch at 45 to 344 (LFQDPSFPAL…YSRLEICNLT (300 aa)) folds into the Calpain catalytic domain. Positions 91 and 96 each coordinate Ca(2+). C105 is an active-site residue. Positions 175, 229, and 230 each coordinate Ca(2+). Active-site residues include H262 and N286. Ca(2+)-binding residues include E292, D299, and E323. Residues 345 to 514 (PDTLTSDSYK…KKADYQVVDD (170 aa)) form a domain III region. Residues 515–529 (EIEANIDEIDISEDD) form a linker region. The segment at 530-700 (IDDGFRRLFA…LISWLSFSVL (171 aa)) is domain IV. Ca(2+) contacts are provided by A542, D545, E547, E552, D585, D587, S589, K591, E596, D615, D617, S619, T621, E626, D658, and N661. EF-hand domains are found at residues 572–597 (FSIETCKIMVDMLDSDGSGKLGLKEF), 602–637 (TKIQKYQKIYREIDVDRSGTMNSYEMRKALEEAGFK), and 652–672 (DDDLIIDFDNFVRCLIRLETL).

Belongs to the peptidase C2 family. Forms a heterodimer with a small (regulatory) subunit (CAPNS1). Interacts with CPEB3; this leads to cleavage of CPEB3. The cofactor is Ca(2+). As to expression, ubiquitous.

Its subcellular location is the cytoplasm. It is found in the cell membrane. It catalyses the reaction Broad endopeptidase specificity.. Its activity is regulated as follows. Activated by 200-1000 micromolar concentrations of calcium and inhibited by calpastatin. Its function is as follows. Calcium-regulated non-lysosomal thiol-protease which catalyzes limited proteolysis of substrates involved in cytoskeletal remodeling and signal transduction. Proteolytically cleaves MYOC at 'Arg-226'. Proteolytically cleaves CPEB3 following neuronal stimulation which abolishes CPEB3 translational repressor activity, leading to translation of CPEB3 target mRNAs. This chain is Calpain-2 catalytic subunit (CAPN2), found in Bos taurus (Bovine).